The primary structure comprises 471 residues: 3-isopropylmalate dehydratase large subunit (471 aa).

3 residues coordinate [4Fe-4S] cluster: cysteine 351, cysteine 412, and cysteine 415.

It belongs to the aconitase/IPM isomerase family. LeuC type 1 subfamily. As to quaternary structure, heterodimer of LeuC and LeuD. The cofactor is [4Fe-4S] cluster.

It carries out the reaction (2R,3S)-3-isopropylmalate = (2S)-2-isopropylmalate. It functions in the pathway amino-acid biosynthesis; L-leucine biosynthesis; L-leucine from 3-methyl-2-oxobutanoate: step 2/4. Catalyzes the isomerization between 2-isopropylmalate and 3-isopropylmalate, via the formation of 2-isopropylmaleate. The sequence is that of 3-isopropylmalate dehydratase large subunit from Hahella chejuensis (strain KCTC 2396).